We begin with the raw amino-acid sequence, 81 residues long: Short neurotoxin 1 (81 aa).

A signal peptide spans 1–21 (MKTLLLTLVVVTIVCLDLGYT). Cystine bridges form between Cys24–Cys43, Cys38–Cys60, Cys62–Cys73, and Cys74–Cys79.

The protein belongs to the three-finger toxin family. Short-chain subfamily. Type I alpha-neurotoxin sub-subfamily. Expressed by the venom gland.

The protein localises to the secreted. Binds to muscle nicotinic acetylcholine receptor (nAChR) and inhibit acetylcholine from binding to the receptor, thereby impairing neuromuscular transmission. The chain is Short neurotoxin 1 from Hoplocephalus stephensii (Stephens's banded snake).